The primary structure comprises 470 residues: Poly(A) polymerase catalytic subunit (470 aa).

Active-site residues include aspartate 192 and aspartate 194.

This sequence belongs to the poxviridae poly(A) polymerase catalytic subunit family. As to quaternary structure, heterodimer of a large (catalytic) subunit and a small (regulatory) subunit.

The enzyme catalyses RNA(n) + ATP = RNA(n)-3'-adenine ribonucleotide + diphosphate. Polymerase that creates the 3'-poly(A) tail of mRNA's. The sequence is that of Poly(A) polymerase catalytic subunit (PAPL) from Deerpox virus (strain Mule deer/United States/W-848-83/1983) (DPV).